The primary structure comprises 61 residues: Alpha-conotoxin-like PnMGMR-02 (61 aa).

Positions 1–21 (MGMRMMFTVFLLVVLATTVVS) are cleaved as a signal peptide. Residues 22-44 (FTSDRASDGGNAAASDLIALTIK) constitute a propeptide that is removed on maturation. Disulfide bonds link cysteine 46/cysteine 52 and cysteine 47/cysteine 60. A ser-Xaa-Pro motif, crucial for potent interaction with nAChR region spans residues 48–50 (SRP). Cysteine 60 is modified (cysteine amide).

Belongs to the conotoxin A superfamily. As to expression, expressed by the venom duct.

The protein localises to the secreted. In terms of biological role, alpha-conotoxins act on postsynaptic membranes, they bind to the nicotinic acetylcholine receptors (nAChR) and thus inhibit them. This toxin blocks mammalian nAChRs (alpha-7 &gt; alpha-3/beta-2). The protein is Alpha-conotoxin-like PnMGMR-02 of Conus pennaceus (Feathered cone).